The chain runs to 230 residues: 5'-methylthioadenosine/S-adenosylhomocysteine nucleosidase (230 aa).

E12 (proton acceptor) is an active-site residue. Substrate is bound by residues G78, I152, and 173-174 (ME). D197 (proton donor) is an active-site residue.

The protein belongs to the PNP/UDP phosphorylase family. MtnN subfamily.

It carries out the reaction S-adenosyl-L-homocysteine + H2O = S-(5-deoxy-D-ribos-5-yl)-L-homocysteine + adenine. The enzyme catalyses S-methyl-5'-thioadenosine + H2O = 5-(methylsulfanyl)-D-ribose + adenine. It catalyses the reaction 5'-deoxyadenosine + H2O = 5-deoxy-D-ribose + adenine. It participates in amino-acid biosynthesis; L-methionine biosynthesis via salvage pathway; S-methyl-5-thio-alpha-D-ribose 1-phosphate from S-methyl-5'-thioadenosine (hydrolase route): step 1/2. Functionally, catalyzes the irreversible cleavage of the glycosidic bond in both 5'-methylthioadenosine (MTA) and S-adenosylhomocysteine (SAH/AdoHcy) to adenine and the corresponding thioribose, 5'-methylthioribose and S-ribosylhomocysteine, respectively. Also cleaves 5'-deoxyadenosine, a toxic by-product of radical S-adenosylmethionine (SAM) enzymes, into 5-deoxyribose and adenine. The polypeptide is 5'-methylthioadenosine/S-adenosylhomocysteine nucleosidase (Actinobacillus succinogenes (strain ATCC 55618 / DSM 22257 / CCUG 43843 / 130Z)).